We begin with the raw amino-acid sequence, 360 residues long: Probable dual-specificity RNA methyltransferase RlmN (360 aa).

Glutamate 91 (proton acceptor) is an active-site residue. Residues 97–335 form the Radical SAM core domain; the sequence is QHYGQSVCVT…CVVRQEHGTD (239 aa). The cysteines at positions 104 and 340 are disulfide-linked. 3 residues coordinate [4Fe-4S] cluster: cysteine 111, cysteine 115, and cysteine 118. S-adenosyl-L-methionine contacts are provided by residues 163-164, serine 195, 218-220, and asparagine 296; these read GE and SLH. Cysteine 340 (S-methylcysteine intermediate) is an active-site residue.

This sequence belongs to the radical SAM superfamily. RlmN family. The cofactor is [4Fe-4S] cluster.

Its subcellular location is the cytoplasm. The catalysed reaction is adenosine(2503) in 23S rRNA + 2 reduced [2Fe-2S]-[ferredoxin] + 2 S-adenosyl-L-methionine = 2-methyladenosine(2503) in 23S rRNA + 5'-deoxyadenosine + L-methionine + 2 oxidized [2Fe-2S]-[ferredoxin] + S-adenosyl-L-homocysteine. It catalyses the reaction adenosine(37) in tRNA + 2 reduced [2Fe-2S]-[ferredoxin] + 2 S-adenosyl-L-methionine = 2-methyladenosine(37) in tRNA + 5'-deoxyadenosine + L-methionine + 2 oxidized [2Fe-2S]-[ferredoxin] + S-adenosyl-L-homocysteine. In terms of biological role, specifically methylates position 2 of adenine 2503 in 23S rRNA and position 2 of adenine 37 in tRNAs. The protein is Probable dual-specificity RNA methyltransferase RlmN of Streptococcus equi subsp. zooepidemicus (strain H70).